We begin with the raw amino-acid sequence, 386 residues long: MLKALHFGAGNIGRGFIGYLLNKSGYEVTFVDISKEIVDNINKYKKYNVIILKEPVEKEEVKEVKALHLEEEDKVLDAFLEADMVTTSVGVSNLSSIGGRLKKYLKARKEKNEKPLDIMACENALFATDVLRERVVKEEDDDFITYLNLKVGFPNTAVDRIVPAVKIDKKLPVDVAVEEFFEWDIEKNKIKGNLQIEGVELVDDLKPYIERKLFLLNGAHATTAYLGYLRGYTYIHQAIKDDNIRAIVKGMQEEISTALSKKYDVDKESLMAYAEKVIKRFENPYLQDEVTRVGREPLRKLSSEDRLIAPLKLCSEVGITPNFILYGIAAGLLFDYKEDAQAVKMREYVEQFGIKKAVNVITGLEEESDLVEEIEKRYFELKGKLI.

4–15 (ALHFGAGNIGRG) contributes to the NAD(+) binding site.

It belongs to the mannitol dehydrogenase family.

It catalyses the reaction D-mannitol 1-phosphate + NAD(+) = beta-D-fructose 6-phosphate + NADH + H(+). The polypeptide is Mannitol-1-phosphate 5-dehydrogenase (Caldanaerobacter subterraneus subsp. tengcongensis (strain DSM 15242 / JCM 11007 / NBRC 100824 / MB4) (Thermoanaerobacter tengcongensis)).